Here is a 344-residue protein sequence, read N- to C-terminus: DNA-directed RNA polymerase subunit alpha (344 aa).

Positions 1-238 (MKVIKTAPLI…KQLGVFGERP (238 aa)) are alpha N-terminal domain (alpha-NTD). Positions 253–344 (DAKDLSAKIE…EKLEDKGGND (92 aa)) are alpha C-terminal domain (alpha-CTD).

This sequence belongs to the RNA polymerase alpha chain family. As to quaternary structure, homodimer. The RNAP catalytic core consists of 2 alpha, 1 beta, 1 beta' and 1 omega subunit. When a sigma factor is associated with the core the holoenzyme is formed, which can initiate transcription.

It catalyses the reaction RNA(n) + a ribonucleoside 5'-triphosphate = RNA(n+1) + diphosphate. Its function is as follows. DNA-dependent RNA polymerase catalyzes the transcription of DNA into RNA using the four ribonucleoside triphosphates as substrates. This chain is DNA-directed RNA polymerase subunit alpha, found in Helicobacter pylori (strain HPAG1).